A 150-amino-acid polypeptide reads, in one-letter code: Photosystem I reaction center subunit XI (150 aa).

Over 1 to 72 (MSDFIQSYNN…DKLGPLRNTD (72 aa)) the chain is Stromal. A helical transmembrane segment spans residues 73–93 (VALLSGFLSAVGLIIILTVCL). Over 94 to 118 (SMYGNVSFDKDDAKDLLQTTEGWGQ) the chain is Lumenal. The helical transmembrane segment at 119–139 (FTAGFLVGAVGGSGFAYLLLA) threads the bilayer. At 140–150 (NIPVLQNLGLS) the chain is on the stromal side.

Belongs to the PsaL family.

Its subcellular location is the plastid. It localises to the chloroplast thylakoid membrane. This is Photosystem I reaction center subunit XI from Gracilaria tenuistipitata var. liui (Red alga).